The chain runs to 438 residues: MRVFIDEIARHVDQEVELRGWLYQRRSKGKIHFLILRDGTGFLQATVVQGEVPEAVFREADHLPQETALRVWGRVREDRRAPGGFELAVRDLQVVSRPQGEYPIGPKEHGIDFLMDHRHLWLRHRRPFAVMRIRDELERAIHEFFGERGFLRFDAPILTPSAVEGTTELFEVELFDGEKAYLSQSGQLYAEAGALAFAKVYTFGPTFRAERSKTRRHLLEFWMVEPEVAFMTHEENMALQEELVSFLVARVLERRSRELEMLGRDPKALEPAAEGHYPRLTYKEAVALVNRIAQEDPEVPPLPYGEDFGAPHEAALSRRFDRPVFVERYPARIKAFYMEPDPEDPELVLNDDLLAPEGYGEIIGGSQRIHDLELLRRKIQEFGLPEEVYDWYLDLRRFGSVPHSGFGLGLERTVAWICGLAHVREAIPFPRMYTRMRP.

Belongs to the class-II aminoacyl-tRNA synthetase family. Homodimer.

Its subcellular location is the cytoplasm. It catalyses the reaction tRNA(Asn) + L-asparagine + ATP = L-asparaginyl-tRNA(Asn) + AMP + diphosphate + H(+). The protein is Asparagine--tRNA ligase of Thermus thermophilus (strain ATCC 27634 / DSM 579 / HB8).